Consider the following 434-residue polypeptide: Putative ankyrin repeat protein FPV023 (434 aa).

ANK repeat units follow at residues 33–62 (RLKI…DPVA), 134–163 (LTIS…DINF), 167–197 (IGNT…DINI), 201–230 (YGTT…DPNS), 236–265 (IGTK…DPNI), 269–299 (AGVT…DPNI), and 303–330 (NGTT…DINI).

The sequence is that of Putative ankyrin repeat protein FPV023 from Fowlpox virus (strain NVSL) (FPV).